The sequence spans 394 residues: Cytohesin-4 (394 aa).

Positions 12–65 (SSGETEELQRIKWHRKQLLEDIQKLKDEIADVFAQIDCFESAEESRMAQKEKEL) form a coiled coil. The 188-residue stretch at 54–241 (EESRMAQKEK…RNLFDSIKSE (188 aa)) folds into the SEC7 domain. In terms of domain architecture, PH spans 259 to 375 (NPDREGWLLK…WIESIRASIT (117 aa)). Residues 268–275 (KLGGRVKT), Arg279, Tyr290, and Arg300 each bind a 1,2-diacyl-sn-glycero-3-phospho-(1D-myo-inositol-3,4,5-trisphosphate). Positions 386-394 (RKKKIASKQ) are C-terminal autoinhibitory region.

In terms of tissue distribution, expressed predominantly in peripheral blood leukocytes.

Its subcellular location is the cell membrane. Its function is as follows. Promotes guanine-nucleotide exchange on ARF1 and ARF5. Promotes the activation of ARF factors through replacement of GDP with GTP. This is Cytohesin-4 (CYTH4) from Homo sapiens (Human).